Consider the following 92-residue polypeptide: Small ribosomal subunit protein uS19 (92 aa).

The protein belongs to the universal ribosomal protein uS19 family.

Protein S19 forms a complex with S13 that binds strongly to the 16S ribosomal RNA. The chain is Small ribosomal subunit protein uS19 from Lactococcus lactis subsp. lactis (strain IL1403) (Streptococcus lactis).